A 188-amino-acid chain; its full sequence is Holliday junction branch migration complex subunit RuvA (188 aa).

The interval 1-62 is domain I; the sequence is MIVGVRGVLV…EDAQLLYGFL (62 aa). Positions 63 to 135 are domain II; that stretch reads ELGEKKLFER…LSGFDTELII (73 aa). The segment at 135–139 is flexible linker; sequence ISASE. Positions 140-188 are domain III; the sequence is PKSLAVAQASEALESLGFKKDKISKALGSCSAVDTAILVKEALKLLQTI.

It belongs to the RuvA family. Homotetramer. Forms an RuvA(8)-RuvB(12)-Holliday junction (HJ) complex. HJ DNA is sandwiched between 2 RuvA tetramers; dsDNA enters through RuvA and exits via RuvB. An RuvB hexamer assembles on each DNA strand where it exits the tetramer. Each RuvB hexamer is contacted by two RuvA subunits (via domain III) on 2 adjacent RuvB subunits; this complex drives branch migration. In the full resolvosome a probable DNA-RuvA(4)-RuvB(12)-RuvC(2) complex forms which resolves the HJ.

It localises to the cytoplasm. Functionally, the RuvA-RuvB-RuvC complex processes Holliday junction (HJ) DNA during genetic recombination and DNA repair, while the RuvA-RuvB complex plays an important role in the rescue of blocked DNA replication forks via replication fork reversal (RFR). RuvA specifically binds to HJ cruciform DNA, conferring on it an open structure. The RuvB hexamer acts as an ATP-dependent pump, pulling dsDNA into and through the RuvAB complex. HJ branch migration allows RuvC to scan DNA until it finds its consensus sequence, where it cleaves and resolves the cruciform DNA. The sequence is that of Holliday junction branch migration complex subunit RuvA from Sulfurimonas denitrificans (strain ATCC 33889 / DSM 1251) (Thiomicrospira denitrificans (strain ATCC 33889 / DSM 1251)).